The sequence spans 431 residues: Zeaxanthin glucosyltransferase (431 aa).

Belongs to the UDP-glycosyltransferase family.

It catalyses the reaction all-trans-zeaxanthin + 2 UDP-alpha-D-glucose = zeaxanthin bis(beta-D-glucoside) + 2 UDP + 2 H(+). It functions in the pathway carotenoid biosynthesis; zeaxanthin diglucoside biosynthesis. Its function is as follows. Catalyzes the glycosylation reaction which converts zeaxanthin to zeaxanthin bis(beta-D-glucoside). The reaction proceeds in two steps with the monoglucoside as an intermediate. The sequence is that of Zeaxanthin glucosyltransferase (crtX) from Pantoea ananas (Erwinia uredovora).